Here is a 432-residue protein sequence, read N- to C-terminus: Guanine/hypoxanthine permease PbuO (432 aa).

The next 10 membrane-spanning stretches (helical) occupy residues 15–35, 51–71, 92–112, 133–153, 174–194, 196–216, 234–254, 340–360, 379–399, and 412–432; these read IIAG…NPVI, IIAS…PIAI, GITY…FIIL, ITTG…GIVA, LVGL…ALFI, MAAT…KGFM, FGDV…LVTI, ALSG…SLMM, LVIL…LGFI, and REIH…LFIL.

This sequence belongs to the nucleobase:cation symporter-2 (NCS2) (TC 2.A.40) family. Azg-like subfamily.

It localises to the cell membrane. Involved in the uptake of the purine bases hypoxanthine and guanine. May work at purine concentrations higher than 100 uM. The chain is Guanine/hypoxanthine permease PbuO (pbuO) from Bacillus subtilis (strain 168).